The sequence spans 513 residues: Probable WRKY transcription factor 3 (513 aa).

Positions 1-11 (MAEKEEKEPSK) are enriched in basic and acidic residues. Disordered regions lie at residues 1–26 (MAEKEEKEPSKLKSSTGVSRPTISLP), 175–281 (NVHM…PACP), and 297–394 (IIYK…VASS). The segment covering 179 to 201 (QQSQQSEYPSSTQQQQQQQQQAS) has biased composition (low complexity). Polar residues predominate over residues 202–228 (LTEIPSFSSAPRSQIRASVQETSQGQR). A compositionally biased stretch (basic and acidic residues) spans 229-240 (ETSEISVFEHRS). The WRKY 1 DNA-binding region spans 244–308 (NADKPADDGY…YKGQHNHELP (65 aa)). Polar residues-rich tracts occupy residues 311–335 (RGNNNGSCKSSDIANQFQTSNSSLN) and 343–355 (TSQVTTTEQMSEA). Over residues 368 to 387 (VGERHEDEPDPKRRNTEVRV) the composition is skewed to basic and acidic residues. The WRKY 2 DNA-binding region spans 409 to 474 (SEVDLLDDGY…YEGKHNHDVP (66 aa)).

In young, mature and senescent leaves.

Its subcellular location is the nucleus. Its function is as follows. Transcription factor. Interacts specifically with the W box (5'-(T)TGAC[CT]-3'), a frequently occurring elicitor-responsive cis-acting element. The protein is Probable WRKY transcription factor 3 (WRKY3) of Arabidopsis thaliana (Mouse-ear cress).